The primary structure comprises 180 residues: uncharacterized protein (180 aa).

The N-acetyltransferase domain maps to 45–180 (FVFSQVRTLD…GNRCAFWYAN (136 aa)).

Belongs to the acetyltransferase family. Ycf52 subfamily.

This is an uncharacterized protein from Prochlorococcus marinus (strain SARG / CCMP1375 / SS120).